The following is a 498-amino-acid chain: Protein nucleotidyltransferase YdiU (498 aa).

Gly-88, Gly-90, Arg-91, Lys-111, Asp-123, Gly-124, Arg-174, and Arg-181 together coordinate ATP. Asp-250 acts as the Proton acceptor in catalysis. 2 residues coordinate Mg(2+): Asn-251 and Asp-260. Asp-260 contributes to the ATP binding site.

This sequence belongs to the SELO family. Requires Mg(2+) as cofactor. It depends on Mn(2+) as a cofactor.

It catalyses the reaction L-seryl-[protein] + ATP = 3-O-(5'-adenylyl)-L-seryl-[protein] + diphosphate. The enzyme catalyses L-threonyl-[protein] + ATP = 3-O-(5'-adenylyl)-L-threonyl-[protein] + diphosphate. It carries out the reaction L-tyrosyl-[protein] + ATP = O-(5'-adenylyl)-L-tyrosyl-[protein] + diphosphate. The catalysed reaction is L-histidyl-[protein] + UTP = N(tele)-(5'-uridylyl)-L-histidyl-[protein] + diphosphate. It catalyses the reaction L-seryl-[protein] + UTP = O-(5'-uridylyl)-L-seryl-[protein] + diphosphate. The enzyme catalyses L-tyrosyl-[protein] + UTP = O-(5'-uridylyl)-L-tyrosyl-[protein] + diphosphate. Functionally, nucleotidyltransferase involved in the post-translational modification of proteins. It can catalyze the addition of adenosine monophosphate (AMP) or uridine monophosphate (UMP) to a protein, resulting in modifications known as AMPylation and UMPylation. This chain is Protein nucleotidyltransferase YdiU, found in Methylorubrum populi (strain ATCC BAA-705 / NCIMB 13946 / BJ001) (Methylobacterium populi).